The sequence spans 416 residues: Gamma-glutamyl phosphate reductase (416 aa).

It belongs to the gamma-glutamyl phosphate reductase family.

It localises to the cytoplasm. It carries out the reaction L-glutamate 5-semialdehyde + phosphate + NADP(+) = L-glutamyl 5-phosphate + NADPH + H(+). Its pathway is amino-acid biosynthesis; L-proline biosynthesis; L-glutamate 5-semialdehyde from L-glutamate: step 2/2. Its function is as follows. Catalyzes the NADPH-dependent reduction of L-glutamate 5-phosphate into L-glutamate 5-semialdehyde and phosphate. The product spontaneously undergoes cyclization to form 1-pyrroline-5-carboxylate. The chain is Gamma-glutamyl phosphate reductase from Petrotoga mobilis (strain DSM 10674 / SJ95).